Here is a 483-residue protein sequence, read N- to C-terminus: Glutamyl-tRNA(Gln) amidotransferase subunit A (483 aa).

Active-site charge relay system residues include K76 and S151. S175 acts as the Acyl-ester intermediate in catalysis.

The protein belongs to the amidase family. GatA subfamily. In terms of assembly, heterotrimer of A, B and C subunits.

It carries out the reaction L-glutamyl-tRNA(Gln) + L-glutamine + ATP + H2O = L-glutaminyl-tRNA(Gln) + L-glutamate + ADP + phosphate + H(+). Functionally, allows the formation of correctly charged Gln-tRNA(Gln) through the transamidation of misacylated Glu-tRNA(Gln) in organisms which lack glutaminyl-tRNA synthetase. The reaction takes place in the presence of glutamine and ATP through an activated gamma-phospho-Glu-tRNA(Gln). The chain is Glutamyl-tRNA(Gln) amidotransferase subunit A from Pseudomonas putida (strain GB-1).